The chain runs to 356 residues: UDP-N-acetylglucosamine--N-acetylmuramyl-(pentapeptide) pyrophosphoryl-undecaprenol N-acetylglucosamine transferase (356 aa).

Residues 15–17 (TGG), Asn-127, Arg-163, Ser-191, Ile-244, 263–268 (ALTVSE), and Gln-288 contribute to the UDP-N-acetyl-alpha-D-glucosamine site.

This sequence belongs to the glycosyltransferase 28 family. MurG subfamily.

The protein localises to the cell inner membrane. The catalysed reaction is di-trans,octa-cis-undecaprenyl diphospho-N-acetyl-alpha-D-muramoyl-L-alanyl-D-glutamyl-meso-2,6-diaminopimeloyl-D-alanyl-D-alanine + UDP-N-acetyl-alpha-D-glucosamine = di-trans,octa-cis-undecaprenyl diphospho-[N-acetyl-alpha-D-glucosaminyl-(1-&gt;4)]-N-acetyl-alpha-D-muramoyl-L-alanyl-D-glutamyl-meso-2,6-diaminopimeloyl-D-alanyl-D-alanine + UDP + H(+). The protein operates within cell wall biogenesis; peptidoglycan biosynthesis. In terms of biological role, cell wall formation. Catalyzes the transfer of a GlcNAc subunit on undecaprenyl-pyrophosphoryl-MurNAc-pentapeptide (lipid intermediate I) to form undecaprenyl-pyrophosphoryl-MurNAc-(pentapeptide)GlcNAc (lipid intermediate II). The polypeptide is UDP-N-acetylglucosamine--N-acetylmuramyl-(pentapeptide) pyrophosphoryl-undecaprenol N-acetylglucosamine transferase (Klebsiella pneumoniae (strain 342)).